The primary structure comprises 449 residues: Glutathione reductase (449 aa).

Residues Ser-15, Gly-16, Glu-35, Thr-42, Cys-43, and Lys-51 each coordinate FAD. Residue Ser-15 coordinates glutathione. Cys-43 and Cys-48 form a disulfide bridge. Tyr-99 provides a ligand contact to glutathione. Ala-115 contributes to the FAD binding site. NADP(+) contacts are provided by Gly-175, Ile-178, Glu-181, Arg-198, Arg-204, and Gly-261. Residues Asp-302 and Thr-310 each contribute to the FAD site. Ala-340 serves as a coordination point for NADP(+). An FAD-binding site is contributed by His-435. The active-site Proton acceptor is the His-435.

It belongs to the class-I pyridine nucleotide-disulfide oxidoreductase family. As to quaternary structure, homodimer. Requires FAD as cofactor.

It is found in the cytoplasm. It catalyses the reaction 2 glutathione + NADP(+) = glutathione disulfide + NADPH + H(+). It participates in xenobiotic degradation; (2,4,5-trichlorophenoxy)acetate degradation. In terms of biological role, catalyzes the reduction of glutathione disulfide (GSSG) to reduced glutathione (GSH). Constitutes the major mechanism to maintain a high GSH:GSSG ratio in the cytosol. The sequence is that of Glutathione reductase (gor) from Burkholderia cepacia (Pseudomonas cepacia).